The following is a 1439-amino-acid chain: Probable histone acetyltransferase HAC-like 2 (1439 aa).

Disordered stretches follow at residues 1-43 (MKQG…ASAD) and 313-335 (YGIS…TPTP). Residues 325–335 (VNPSTRSTPTP) are compositionally biased toward polar residues. The TAZ-type zinc finger occupies 607-687 (ENTKQYHAQA…NEHCHVCCKA (81 aa)). Residues 827–933 (KIHCHVQQET…EYTCFKCYIE (107 aa)) form a PHD-type; degenerate zinc finger. The 436-residue stretch at 948–1383 (VRGAKDLPRT…MLYHLHNPTG (436 aa)) folds into the CBP/p300-type HAT domain. Residues 964 to 989 (EERLFKRLREERQERANKLKTSLDEV) adopt a coiled-coil conformation. Acetyl-CoA contacts are provided by residues 1071–1073 (LDS), 1090–1091 (RT), and tryptophan 1146. Residues 1265–1328 (HLQYSCSHCC…ILHPVEIVGV (64 aa)) form a ZZ-type zinc finger. Residues cysteine 1270, cysteine 1273, cysteine 1285, cysteine 1288, cysteine 1294, cysteine 1297, histidine 1310, and histidine 1318 each coordinate Zn(2+).

It localises to the nucleus. It catalyses the reaction L-lysyl-[protein] + acetyl-CoA = N(6)-acetyl-L-lysyl-[protein] + CoA + H(+). Functionally, acetyltransferase enzyme. Acetylates histones, giving a specific tag for transcriptional activation. In Oryza sativa subsp. japonica (Rice), this protein is Probable histone acetyltransferase HAC-like 2.